Consider the following 626-residue polypeptide: Chaperone protein DnaK (626 aa).

Thr197 bears the Phosphothreonine; by autocatalysis mark. Positions 598–612 (AQGEQGQAAQPQAET) are enriched in low complexity. The segment at 598-626 (AQGEQGQAAQPQAETQGDDVQDVEFEEVK) is disordered. The segment covering 613-626 (QGDDVQDVEFEEVK) has biased composition (acidic residues).

This sequence belongs to the heat shock protein 70 family.

Its function is as follows. Acts as a chaperone. The protein is Chaperone protein DnaK of Flavobacterium psychrophilum (strain ATCC 49511 / DSM 21280 / CIP 103535 / JIP02/86).